A 420-amino-acid polypeptide reads, in one-letter code: Fasciclin-like arabinogalactan protein 8 (420 aa).

Positions 1 to 25 (MAASQTFSLLAFTFSLLAFASTVSS) are cleaved as a signal peptide. FAS1 domains are found at residues 26–172 (HNIT…DAPI) and 186–326 (SLSN…DNVL). 5 N-linked (GlcNAc...) asparagine glycosylation sites follow: asparagine 27, asparagine 128, asparagine 162, asparagine 189, and asparagine 273. The segment at 335–394 (SKSPSPAPAPEPVTAPTPSPADAPSPTAASPPAPPTDESPESAPSDSPTGSANSKSANAA) is disordered. Pro residues predominate over residues 339-371 (SPAPAPEPVTAPTPSPADAPSPTAASPPAPPTD). The GPI-anchor amidated asparagine moiety is linked to residue asparagine 392. The propeptide at 393–420 (AAVGVSTPSLFTALVTIAAIAVSVSLCS) is removed in mature form.

The protein belongs to the fasciclin-like AGP family. Expressed mainly in flowers and to a lesser extent in leaves and roots.

It localises to the cell membrane. In terms of biological role, may be a cell surface adhesion protein. This chain is Fasciclin-like arabinogalactan protein 8 (FLA8), found in Arabidopsis thaliana (Mouse-ear cress).